A 185-amino-acid polypeptide reads, in one-letter code: Large ribosomal subunit protein uL6 (185 aa).

It belongs to the universal ribosomal protein uL6 family. Part of the 50S ribosomal subunit.

This protein binds to the 23S rRNA, and is important in its secondary structure. It is located near the subunit interface in the base of the L7/L12 stalk, and near the tRNA binding site of the peptidyltransferase center. In Deinococcus deserti (strain DSM 17065 / CIP 109153 / LMG 22923 / VCD115), this protein is Large ribosomal subunit protein uL6.